A 121-amino-acid polypeptide reads, in one-letter code: Small ribosomal subunit protein uS13 (121 aa).

Positions 94 to 121 are disordered; the sequence is GLPVRGQNTKNNARTRKGPRRTVANKKK. Basic residues predominate over residues 106–121; it reads ARTRKGPRRTVANKKK.

It belongs to the universal ribosomal protein uS13 family. As to quaternary structure, part of the 30S ribosomal subunit. Forms a loose heterodimer with protein S19. Forms two bridges to the 50S subunit in the 70S ribosome.

Its function is as follows. Located at the top of the head of the 30S subunit, it contacts several helices of the 16S rRNA. In the 70S ribosome it contacts the 23S rRNA (bridge B1a) and protein L5 of the 50S subunit (bridge B1b), connecting the 2 subunits; these bridges are implicated in subunit movement. Contacts the tRNAs in the A and P-sites. The polypeptide is Small ribosomal subunit protein uS13 (Anoxybacillus flavithermus (strain DSM 21510 / WK1)).